A 487-amino-acid polypeptide reads, in one-letter code: Wax ester synthase/diacylglycerol acyltransferase 3 (487 aa).

The Cytoplasmic segment spans residues 1–193 (MYTMKKGKDM…KHASSNKKSW (193 aa)). Histidine 151 serves as the catalytic Proton acceptor. A helical transmembrane segment spans residues 194–214 (WLVGRFWFMIRIIFTTVVELF). The Lumenal portion of the chain corresponds to 215–487 (KYLLTLCFMR…MEKGVHKMEV (273 aa)).

This sequence in the N-terminal section; belongs to the long-chain O-acyltransferase family. Mostly expressed in flowers and siliques.

It localises to the cell membrane. Its subcellular location is the endoplasmic reticulum membrane. The enzyme catalyses an acyl-CoA + a 1,2-diacyl-sn-glycerol = a triacyl-sn-glycerol + CoA. It catalyses the reaction a long chain fatty alcohol + a fatty acyl-CoA = a wax ester + CoA. It participates in glycerolipid metabolism; triacylglycerol biosynthesis. The protein operates within lipid metabolism. In terms of biological role, bifunctional wax ester synthase/diacylglycerol acyltransferase. Involved in cuticular wax biosynthesis. The sequence is that of Wax ester synthase/diacylglycerol acyltransferase 3 from Arabidopsis thaliana (Mouse-ear cress).